The sequence spans 831 residues: MPSQSRSRDRYGRDSDRDRSRVQPRRRYHVSEDDDDDDDFDDNPRDRRYRRDGYRRAPVDSRAYDSHDDYEVVDVEEEPRRYRSDTERRRERARASPGTSPRKRERTRDSGGGHRRRRTEESDGSQAPQAHRDRRSRTRRDRGLDDEDLEDAARRLRRRERERERERRAETSKHKSTDSSNSSAGLLNANALAKLRAQHEELDRQEQRRAEKEAKAERKRRRKRPAVEGQMRTLDPFPDEVPRGQSKGRIVSGAYLEEGRAPDMEVRLRGGGRGPPRERRWEKDSDGSAPLTPFWKRKKWWWIGAIVLVIVVIIIVVAVVVSNNKKSDSDSDSDSNSGSSDSWGGDKSSLNGLDHDSIPKSAQGTVLDPWTWYETTDFNVTYTDETVGGLSVMGLNSTWDDSVAPNENVPPLNKPFPYGSQPIRGVNIGGLLSLEPFITPSLFEGYSSDVVDEYTLTTKLGDNAARKLEEHYATFITEQDFADMAEAGIDHVRIPFSYWAVNPREDEPYVAKISWRYLLRVIEYCRKYGLRVNLDPHGMPGSQNGMNHSGRQGSIRWLNGDDGDTYAQRSLEFHEKISKFFAQDRYKNIITIYGLINEPYMLSLDVEKVLNWTVTAAELVQKNGITAKIAFHDGFLNLSKWKTMLKNGPSNLLLDTHQYTIYNVAQIVLNHTAKVNFVCNDWVGMIGEINSTSEGWGPTICGEFTQADTDCAKNLNNVGRGTRWEGTYSEGDSTMYCPTAEQRTCSCTEANADPSEYSDDYKLFLKTYAEAQMYAFEQAQGWFYWTWHTESAPQWSYKTGWKNGFMPAKAYNPDYKCGDDIPSFGNLPEYY.

Over residues 1-21 (MPSQSRSRDRYGRDSDRDRSR) the composition is skewed to basic and acidic residues. Disordered stretches follow at residues 1-246 (MPSQ…RGQS) and 261-288 (APDM…SDGS). The Cytoplasmic portion of the chain corresponds to 1–300 (MPSQSRSRDR…LTPFWKRKKW (300 aa)). The span at 32–41 (EDDDDDDDFD) shows a compositional bias: acidic residues. Basic and acidic residues-rich tracts occupy residues 42-70 (DNPR…HDDY), 78-94 (EPRR…ERAR), and 151-177 (DAAR…HKST). Residues 178-195 (DSSNSSAGLLNANALAKL) show a composition bias toward low complexity. 2 stretches are compositionally biased toward basic and acidic residues: residues 197–216 (AQHE…EAKA) and 275–286 (PPRERRWEKDSD). A helical; Signal-anchor for type II membrane protein transmembrane segment spans residues 301–321 (WWIGAIVLVIVVIIIVVAVVV). Residues 322 to 831 (SNNKKSDSDS…PSFGNLPEYY (510 aa)) are Extracellular-facing. Residues 325-360 (KKSDSDSDSDSNSGSSDSWGGDKSSLNGLDHDSIPK) form a disordered region. The segment covering 334–350 (DSNSGSSDSWGGDKSSL) has biased composition (low complexity). Asn379, Asn396, and Asn547 each carry an N-linked (GlcNAc...) asparagine glycan. Glu598 serves as the catalytic Proton donor. Asn611, Asn637, Asn670, and Asn690 each carry an N-linked (GlcNAc...) asparagine glycan. The active-site Nucleophile is Glu703.

Belongs to the glycosyl hydrolase 5 (cellulase A) family.

It is found in the cell membrane. It carries out the reaction Successive hydrolysis of beta-D-glucose units from the non-reducing ends of (1-&gt;3)-beta-D-glucans, releasing alpha-glucose.. In terms of biological role, glucosidase involved in the degradation of cellulosic biomass. Active on lichenan. The sequence is that of Glucan 1,3-beta-glucosidase D (exgD) from Emericella nidulans (strain FGSC A4 / ATCC 38163 / CBS 112.46 / NRRL 194 / M139) (Aspergillus nidulans).